The chain runs to 486 residues: Replication factor C large subunit (486 aa).

ATP is bound at residue 46 to 53 (GPPGSGKT). Residues 419 to 486 (VKKETPKKTE…KKQATLDSFF (68 aa)) form a disordered region. 2 stretches are compositionally biased toward basic and acidic residues: residues 420 to 432 (KKET…KPKE) and 442 to 480 (RISE…KKQA).

It belongs to the activator 1 small subunits family. RfcL subfamily. In terms of assembly, heteromultimer composed of small subunits (RfcS) and large subunits (RfcL).

Part of the RFC clamp loader complex which loads the PCNA sliding clamp onto DNA. This Methanococcus maripaludis (strain DSM 14266 / JCM 13030 / NBRC 101832 / S2 / LL) protein is Replication factor C large subunit.